The sequence spans 681 residues: Methionine--tRNA ligase (681 aa).

A 'HIGH' region motif is present at residues 18–28 (PYANGSIHLGH). Zn(2+) is bound by residues cysteine 149, cysteine 152, cysteine 162, and cysteine 165. The 'KMSKS' region motif lies at 334-338 (KMSKS). Lysine 337 lines the ATP pocket. In terms of domain architecture, tRNA-binding spans 580 to 681 (DFAKLDLRIV…NGAEPGQRVS (102 aa)).

This sequence belongs to the class-I aminoacyl-tRNA synthetase family. MetG type 1 subfamily. As to quaternary structure, homodimer. Zn(2+) is required as a cofactor.

It localises to the cytoplasm. The enzyme catalyses tRNA(Met) + L-methionine + ATP = L-methionyl-tRNA(Met) + AMP + diphosphate. In terms of biological role, is required not only for elongation of protein synthesis but also for the initiation of all mRNA translation through initiator tRNA(fMet) aminoacylation. The protein is Methionine--tRNA ligase of Chromohalobacter salexigens (strain ATCC BAA-138 / DSM 3043 / CIP 106854 / NCIMB 13768 / 1H11).